The following is a 222-amino-acid chain: Cytidylate kinase (222 aa).

12–20 (GPSGAGKGT) is an ATP binding site.

Belongs to the cytidylate kinase family. Type 1 subfamily.

Its subcellular location is the cytoplasm. The enzyme catalyses CMP + ATP = CDP + ADP. It carries out the reaction dCMP + ATP = dCDP + ADP. The polypeptide is Cytidylate kinase (Methylococcus capsulatus (strain ATCC 33009 / NCIMB 11132 / Bath)).